Consider the following 287-residue polypeptide: Glycine--tRNA ligase alpha subunit (287 aa).

It belongs to the class-II aminoacyl-tRNA synthetase family. Tetramer of two alpha and two beta subunits.

The protein resides in the cytoplasm. The enzyme catalyses tRNA(Gly) + glycine + ATP = glycyl-tRNA(Gly) + AMP + diphosphate. The sequence is that of Glycine--tRNA ligase alpha subunit from Campylobacter curvus (strain 525.92).